Here is a 539-residue protein sequence, read N- to C-terminus: Cytochrome P450 monooxygenase tenB (539 aa).

The helical transmembrane segment at 13 to 33 (LGYYEKVAGVLGFLSIALLFW) threads the bilayer. Residues 439–460 (PFRFSRASKDDDDDGKSTSSHA) form a disordered region. Cysteine 481 contacts heme.

Belongs to the cytochrome P450 family. The cofactor is heme.

The protein resides in the membrane. Its pathway is secondary metabolite biosynthesis. Functionally, cytochrome P450 monooxygenase; part of the gene cluster that mediates the biosynthesis of tenellin-type 2-pyridones, iron-chelating compounds involved in iron stress tolerance, competition with the natural competitor fungus Metarhizium robertsii and insect hosts infection. TenB catalyzes the selective N-hydroxylation of the 2-pyridone nitrogen of yield tellinin and 15-hydroxytellenin (15-HT), respectively. The pathway begins with the assembly of the polyketide-amino acid backbone by the hybrid PKS-NRPS tenS with the help of the enoyl reductase tenC. These enzymes catalyze the synthesis of the pyrrolidine-2-dione intermediates pretellinin A, 11-hydropretellenin A, 12-hydropretellenin A, 13-hydropretellenin A, 14-hydropretellenin A, 12-oxopretellenin A and prototellinin D. The cytochrome P450 monooxygenase tenA then catalyzes an oxidative ring expansion of pretenellin A and 14-hydropretellenin A to form the 2-pyridone core, leading to pretenellin B and pyridovericin, respectively. The cytochrome P450 monooxygenase tenB is then required for the selective N-hydroxylation of the 2-pyridone nitrogen of yield tellinin and 15-hydroxytellenin (15-HT), respectively. The UDP-glucosyltransferase GT1 and the methyltransferase MT1, located outside the tenS gene cluster, contribute to the stepwise glycosylation and methylation of 15-HT to obtain the glycoside pyridovericin-N-O-(4-O-methyl-beta-D-glucopyranoside) (PMGP). Additional related compounds such as 1-O-methyl-15-HT, (8Z)-1-O-methyl-15-HT, and O-methyltenellin A are also produced but the enzymes involved in their biosynthesis have still to be determined. This chain is Cytochrome P450 monooxygenase tenB, found in Beauveria bassiana (White muscardine disease fungus).